An 800-amino-acid polypeptide reads, in one-letter code: Mitochondrial intermediate peptidase (800 aa).

The transit peptide at 1 to 23 (MAGHMLMPLRRRPWTCRACLQRL) directs the protein to the mitochondrion. Residues 27–41 (RRSLETAASPSSQSD) show a composition bias toward polar residues. The segment at 27 to 59 (RRSLETAASPSSQSDVYDYAPTNHSTQKKSNDE) is disordered. H563 serves as a coordination point for Zn(2+). E564 is a catalytic residue. Zn(2+)-binding residues include H567 and H570.

It belongs to the peptidase M3 family. Zn(2+) is required as a cofactor.

The protein localises to the mitochondrion matrix. It carries out the reaction Release of an N-terminal octapeptide as second stage of processing of some proteins imported into the mitochondrion.. Cleaves proteins, imported into the mitochondrion, to their mature size. While most mitochondrial precursor proteins are processed to the mature form in one step by mitochondrial processing peptidase (MPP), the sequential cleavage by MIP of an octapeptide after initial processing by MPP is a required step for a subgroup of nuclear-encoded precursor proteins destined for the matrix or the inner membrane. The polypeptide is Mitochondrial intermediate peptidase (oct1) (Aspergillus oryzae (strain ATCC 42149 / RIB 40) (Yellow koji mold)).